A 222-amino-acid chain; its full sequence is Vesicle-associated membrane protein 724 (222 aa).

The Cytoplasmic portion of the chain corresponds to 1-197 (MGQESFIYSF…LWYQNMKIKL (197 aa)). One can recognise a Longin domain in the interval 10 to 115 (FVARGTMILA…SLNKEFGPVM (106 aa)). A v-SNARE coiled-coil homology domain is found at 131–191 (KLIKVKAQVS…TQVRRKLWYQ (61 aa)). A helical; Anchor for type IV membrane protein membrane pass occupies residues 198–218 (VVLGILLLLVLIIWISVCHGF). At 219 to 222 (NCTD) the chain is on the vesicular side.

It belongs to the synaptobrevin family. In terms of tissue distribution, expressed in flowers, leaves, stems and roots.

Its subcellular location is the cell membrane. The protein localises to the early endosome membrane. Involved in the targeting and/or fusion of transport vesicles to their target membrane. This Arabidopsis thaliana (Mouse-ear cress) protein is Vesicle-associated membrane protein 724.